We begin with the raw amino-acid sequence, 161 residues long: Putative pre-16S rRNA nuclease (161 aa).

The tract at residues 142 to 161 is disordered; the sequence is AGSPPGALVPRNRVDPDRHA.

The protein belongs to the YqgF nuclease family.

Its subcellular location is the cytoplasm. Functionally, could be a nuclease involved in processing of the 5'-end of pre-16S rRNA. The sequence is that of Putative pre-16S rRNA nuclease from Clavibacter sepedonicus (Clavibacter michiganensis subsp. sepedonicus).